The sequence spans 400 residues: Nicotinate phosphoribosyltransferase (400 aa).

Phosphohistidine; by autocatalysis is present on H220.

It belongs to the NAPRTase family. In terms of processing, transiently phosphorylated on a His residue during the reaction cycle. Phosphorylation strongly increases the affinity for substrates and increases the rate of nicotinate D-ribonucleotide production. Dephosphorylation regenerates the low-affinity form of the enzyme, leading to product release.

The enzyme catalyses nicotinate + 5-phospho-alpha-D-ribose 1-diphosphate + ATP + H2O = nicotinate beta-D-ribonucleotide + ADP + phosphate + diphosphate. It functions in the pathway cofactor biosynthesis; NAD(+) biosynthesis; nicotinate D-ribonucleotide from nicotinate: step 1/1. Catalyzes the synthesis of beta-nicotinate D-ribonucleotide from nicotinate and 5-phospho-D-ribose 1-phosphate at the expense of ATP. In Salmonella agona (strain SL483), this protein is Nicotinate phosphoribosyltransferase.